A 190-amino-acid chain; its full sequence is dTTP/UTP pyrophosphatase (190 aa).

Asp71 (proton acceptor) is an active-site residue.

This sequence belongs to the Maf family. YhdE subfamily. It depends on a divalent metal cation as a cofactor.

The protein resides in the cytoplasm. The catalysed reaction is dTTP + H2O = dTMP + diphosphate + H(+). It catalyses the reaction UTP + H2O = UMP + diphosphate + H(+). Functionally, nucleoside triphosphate pyrophosphatase that hydrolyzes dTTP and UTP. May have a dual role in cell division arrest and in preventing the incorporation of modified nucleotides into cellular nucleic acids. The polypeptide is dTTP/UTP pyrophosphatase (Xanthomonas campestris pv. campestris (strain ATCC 33913 / DSM 3586 / NCPPB 528 / LMG 568 / P 25)).